Consider the following 182-residue polypeptide: Isopentenyl-diphosphate Delta-isomerase (182 aa).

2 residues coordinate Mn(2+): His25 and His32. The region spanning 30-164 is the Nudix hydrolase domain; it reads LLHLAFSSWL…PWAFSPWMVM (135 aa). Cys67 is a catalytic residue. His69 contributes to the Mn(2+) binding site. Glu87 is a binding site for Mg(2+). The Mn(2+) site is built by Glu114 and Glu116. Glu116 is an active-site residue.

It belongs to the IPP isomerase type 1 family. In terms of assembly, homodimer. It depends on Mg(2+) as a cofactor. Mn(2+) serves as cofactor.

Its subcellular location is the cytoplasm. It carries out the reaction isopentenyl diphosphate = dimethylallyl diphosphate. Its pathway is isoprenoid biosynthesis; dimethylallyl diphosphate biosynthesis; dimethylallyl diphosphate from isopentenyl diphosphate: step 1/1. In terms of biological role, catalyzes the 1,3-allylic rearrangement of the homoallylic substrate isopentenyl (IPP) to its highly electrophilic allylic isomer, dimethylallyl diphosphate (DMAPP). The protein is Isopentenyl-diphosphate Delta-isomerase of Escherichia coli O45:K1 (strain S88 / ExPEC).